We begin with the raw amino-acid sequence, 440 residues long: tRNA(Ile)-lysidine synthase (440 aa).

28–33 (SGGMDS) lines the ATP pocket.

The protein belongs to the tRNA(Ile)-lysidine synthase family.

It is found in the cytoplasm. The catalysed reaction is cytidine(34) in tRNA(Ile2) + L-lysine + ATP = lysidine(34) in tRNA(Ile2) + AMP + diphosphate + H(+). Functionally, ligates lysine onto the cytidine present at position 34 of the AUA codon-specific tRNA(Ile) that contains the anticodon CAU, in an ATP-dependent manner. Cytidine is converted to lysidine, thus changing the amino acid specificity of the tRNA from methionine to isoleucine. This Xanthomonas axonopodis pv. citri (strain 306) protein is tRNA(Ile)-lysidine synthase.